The chain runs to 134 residues: Profilin-2 (134 aa).

Thr114 is modified (phosphothreonine).

The protein belongs to the profilin family. As to quaternary structure, occurs in many kinds of cells as a complex with monomeric actin in a 1:1 ratio. In terms of processing, phosphorylated by MAP kinases.

It localises to the cytoplasm. The protein localises to the cytoskeleton. Its function is as follows. Binds to actin and affects the structure of the cytoskeleton. At high concentrations, profilin prevents the polymerization of actin, whereas it enhances it at low concentrations. By binding to PIP2, it inhibits the formation of IP3 and DG. This Nicotiana tabacum (Common tobacco) protein is Profilin-2 (PRO2).